A 62-amino-acid polypeptide reads, in one-letter code: Protein DsrB (62 aa).

The protein belongs to the DsrB family.

The chain is Protein DsrB from Enterobacter sp. (strain 638).